Here is a 412-residue protein sequence, read N- to C-terminus: Subtilisin-like protease 6 (412 aa).

The N-terminal stretch at 1–20 is a signal peptide; it reads MGFITKAIPIVLAALSTVNG. A propeptide spanning residues 21–126 is cleaved from the precursor; sequence ARILEAGPHA…VVRTTTNGTN (106 aa). Residues 36–120 form the Inhibitor I9 domain; the sequence is KYIVVMKREV…FIEPDFVVRT (85 aa). 2 N-linked (GlcNAc...) asparagine glycosylation sites follow: Asn-123 and Asn-126. In terms of domain architecture, Peptidase S8 spans 135 to 412; it reads SWGLARVGSK…GKLIYNGSGK (278 aa). Active-site charge relay system residues include Asp-167 and His-198. N-linked (GlcNAc...) asparagine glycosylation is found at Asn-252 and Asn-264. The active-site Charge relay system is Ser-358. Asn-408 carries an N-linked (GlcNAc...) asparagine glycan.

This sequence belongs to the peptidase S8 family.

Its subcellular location is the secreted. Functionally, secreted subtilisin-like serine protease with keratinolytic activity that contributes to pathogenicity. This chain is Subtilisin-like protease 6 (SUB6), found in Trichophyton rubrum (Athlete's foot fungus).